We begin with the raw amino-acid sequence, 61 residues long: Probable tautomerase BH3814 (61 aa).

Residue Pro2 is the Proton acceptor; via imino nitrogen of the active site.

The protein belongs to the 4-oxalocrotonate tautomerase family.

The polypeptide is Probable tautomerase BH3814 (Halalkalibacterium halodurans (strain ATCC BAA-125 / DSM 18197 / FERM 7344 / JCM 9153 / C-125) (Bacillus halodurans)).